Here is a 198-residue protein sequence, read N- to C-terminus: MYDYIKGQLTKITAKYIVVEANGLGYMITVANPYSFTDCVNQQVTIYLHQVIREDAQLLFGFHSEEEKDVFLKLISVSGIGPTTALAIVAVDDNRGLVNAIDNSDITYLMRFPKIGKKTAQQMVLDLAGKFVEAPKEESSKLPKAKHQENEQLDEAIEALLALGYKATELKKIRAFFEGTSETAEQYIKSALKMLMKG.

Residues 1–63 (MYDYIKGQLT…EDAQLLFGFH (63 aa)) form a domain I region. The tract at residues 64–142 (SEEEKDVFLK…EAPKEESSKL (79 aa)) is domain II. Residues 143 to 147 (PKAKH) are flexible linker. A domain III region spans residues 148-198 (QENEQLDEAIEALLALGYKATELKKIRAFFEGTSETAEQYIKSALKMLMKG).

Belongs to the RuvA family. Homotetramer. Forms an RuvA(8)-RuvB(12)-Holliday junction (HJ) complex. HJ DNA is sandwiched between 2 RuvA tetramers; dsDNA enters through RuvA and exits via RuvB. An RuvB hexamer assembles on each DNA strand where it exits the tetramer. Each RuvB hexamer is contacted by two RuvA subunits (via domain III) on 2 adjacent RuvB subunits; this complex drives branch migration. In the full resolvosome a probable DNA-RuvA(4)-RuvB(12)-RuvC(2) complex forms which resolves the HJ.

Its subcellular location is the cytoplasm. Functionally, the RuvA-RuvB-RuvC complex processes Holliday junction (HJ) DNA during genetic recombination and DNA repair, while the RuvA-RuvB complex plays an important role in the rescue of blocked DNA replication forks via replication fork reversal (RFR). RuvA specifically binds to HJ cruciform DNA, conferring on it an open structure. The RuvB hexamer acts as an ATP-dependent pump, pulling dsDNA into and through the RuvAB complex. HJ branch migration allows RuvC to scan DNA until it finds its consensus sequence, where it cleaves and resolves the cruciform DNA. The polypeptide is Holliday junction branch migration complex subunit RuvA (Streptococcus equi subsp. zooepidemicus (strain MGCS10565)).